Consider the following 494-residue polypeptide: UPF0371 protein SPG_0310 (494 aa).

It belongs to the UPF0371 family.

The sequence is that of UPF0371 protein SPG_0310 from Streptococcus pneumoniae serotype 19F (strain G54).